We begin with the raw amino-acid sequence, 430 residues long: uncharacterized protein (430 aa).

12 consecutive transmembrane segments (helical) span residues 36-56 (LFVVSISQIFGGAGLAAGVTV), 69-89 (AFAGLPSALFTLGSAGSALIV), 100-122 (TGLSAGFMIGGLGAIGVIMAAII), 126-148 (FLLFISLLIYGAGTATNLQARYA), 160-180 (TAVSITMVFTTFGAVAGPSLV), 197-217 (GPFILAAAAYMLAGVVLFIML), 253-273 (IIVGATVMVLTQIVMVAIMTM), 285-305 (LGAVGLVIGFHIGAMYLPSLV), 317-337 (AMAISSGTTLLLAGVIAAFAP), 340-360 (SMILLVIALSLLGLGWNFGLI), 384-404 (VLIALSGAAGGALSGMIVAGS), and 406-426 (YLALSLIGGILSLLLIPVVVW).

Belongs to the major facilitator superfamily.

It is found in the cell membrane. This is an uncharacterized protein from Bacillus subtilis (strain 168).